We begin with the raw amino-acid sequence, 446 residues long: Enolase (446 aa).

Substrate-binding residues include His-164 and Glu-173. The active-site Proton donor is the Glu-216. Residues Asp-251, Glu-302, and Asp-329 each contribute to the Mg(2+) site. Glu-302 and Asp-329 together coordinate substrate. The active-site Proton acceptor is the Lys-354. Residues 381–384 (SHRS) and Lys-405 each bind substrate.

The protein belongs to the enolase family. As to quaternary structure, homodimer. Mg(2+) is required as a cofactor.

The protein resides in the cytoplasm. It catalyses the reaction (2R)-2-phosphoglycerate = phosphoenolpyruvate + H2O. It functions in the pathway carbohydrate degradation; glycolysis; pyruvate from D-glyceraldehyde 3-phosphate: step 4/5. The polypeptide is Enolase (ENO1) (Oryza sativa subsp. japonica (Rice)).